The primary structure comprises 486 residues: Probable glycine dehydrogenase (decarboxylating) subunit 2 (486 aa).

The residue at position 269 (Lys-269) is an N6-(pyridoxal phosphate)lysine.

It belongs to the GcvP family. C-terminal subunit subfamily. As to quaternary structure, the glycine cleavage system is composed of four proteins: P, T, L and H. In this organism, the P 'protein' is a heterodimer of two subunits. Pyridoxal 5'-phosphate is required as a cofactor.

The catalysed reaction is N(6)-[(R)-lipoyl]-L-lysyl-[glycine-cleavage complex H protein] + glycine + H(+) = N(6)-[(R)-S(8)-aminomethyldihydrolipoyl]-L-lysyl-[glycine-cleavage complex H protein] + CO2. The glycine cleavage system catalyzes the degradation of glycine. The P protein binds the alpha-amino group of glycine through its pyridoxal phosphate cofactor; CO(2) is released and the remaining methylamine moiety is then transferred to the lipoamide cofactor of the H protein. This is Probable glycine dehydrogenase (decarboxylating) subunit 2 from Chlorobaculum tepidum (strain ATCC 49652 / DSM 12025 / NBRC 103806 / TLS) (Chlorobium tepidum).